A 447-amino-acid chain; its full sequence is SPARC-related modular calcium-binding protein 2 (447 aa).

Residues 1-21 (MLPPQLCWLPLLAALLPPVPA) form the signal peptide. The Kazal-like domain maps to 34-86 (QDKDRDCSLDCPSSPQKPLCASDGRTFLSRCEFQRAKCKDPQLEIAHRGNCKD). Disulfide bonds link C40–C71, C44–C64, C53–C84, C90–C113, C124–C131, and C133–C153. In terms of domain architecture, Thyroglobulin type-1 1 spans 87–153 (VSRCVAERKY…TAVAHKTPRC (67 aa)). The tract at residues 147-230 (AHKTPRCPGS…QSALEEAKQP (84 aa)) is disordered. Positions 161–172 (VPQREGAGKADD) are enriched in basic and acidic residues. Residue N206 is glycosylated (N-linked (GlcNAc...) asparagine). Positions 206–216 (NKTNKNSASSC) are enriched in polar residues. In terms of domain architecture, Thyroglobulin type-1 2 spans 213–281 (ASSCDQEHQS…TSTRYEQPKC (69 aa)). 3 disulfides stabilise this stretch: C216–C240, C251–C258, and C260–C281. Positions 217 to 230 (DQEHQSALEEAKQP) are enriched in basic and acidic residues. EF-hand domains are found at residues 347 to 382 (LEERVVHWYFKLLDKNSSGDIGKKEIKPFKRFLRKK) and 384 to 419 (KPKKCVKKFVEYCDMNNDKSITVQELMGCLGVTREE). Ca(2+)-binding residues include D360, N362, S364, D366, E371, D397, N399, D401, S403, and E408. A glycan (N-linked (GlcNAc...) asparagine) is linked at N362. The tract at residues 416–447 (TREEGKANTRKRHTPRGNAESSSSNRQPRKQG) is disordered.

As to quaternary structure, binds various proteins from the extracellular matrix. Post-translationally, N-glycosylated. In terms of tissue distribution, strongly expressed in ovary, followed by heart, muscle, spleen, brain, thymus, lung, liver, kidney, spleen, testis, ovary and skeletal muscle.

The protein resides in the secreted. It localises to the extracellular space. The protein localises to the extracellular matrix. It is found in the basement membrane. Functionally, can stimulate endothelial cell proliferation, migration, as well as angiogenesis. Promotes matrix assembly and cell adhesiveness. The polypeptide is SPARC-related modular calcium-binding protein 2 (Smoc2) (Mus musculus (Mouse)).